Consider the following 141-residue polypeptide: MVDMDRISISLPTNLLAEFDDIIAERGYASRSEAIRDSIRDYLIKHKWIHSLEGSRAGTISIIYDHHSTDVMEKLTTIQHDYEKIIVATIHMHLDHDHCMEVVLVRGDASNIKELTDKLTSQKGVKQVKLTVMVPGGNIPQ.

Positions 80, 91, 93, and 99 each coordinate Ni(2+).

This sequence belongs to the transcriptional regulatory CopG/NikR family. It depends on Ni(2+) as a cofactor.

Functionally, transcriptional regulator. This Methanococcus vannielii (strain ATCC 35089 / DSM 1224 / JCM 13029 / OCM 148 / SB) protein is Putative nickel-responsive regulator.